The primary structure comprises 269 residues: Hydroxyethylthiazole kinase (269 aa).

M45 is a binding site for substrate. R121 and T167 together coordinate ATP. G194 provides a ligand contact to substrate.

It belongs to the Thz kinase family. Mg(2+) serves as cofactor.

It carries out the reaction 5-(2-hydroxyethyl)-4-methylthiazole + ATP = 4-methyl-5-(2-phosphooxyethyl)-thiazole + ADP + H(+). It participates in cofactor biosynthesis; thiamine diphosphate biosynthesis; 4-methyl-5-(2-phosphoethyl)-thiazole from 5-(2-hydroxyethyl)-4-methylthiazole: step 1/1. Catalyzes the phosphorylation of the hydroxyl group of 4-methyl-5-beta-hydroxyethylthiazole (THZ). This is Hydroxyethylthiazole kinase from Bacillus licheniformis (strain ATCC 14580 / DSM 13 / JCM 2505 / CCUG 7422 / NBRC 12200 / NCIMB 9375 / NCTC 10341 / NRRL NRS-1264 / Gibson 46).